Here is a 413-residue protein sequence, read N- to C-terminus: cAMP-dependent protein kinase regulatory subunit (413 aa).

The disordered stretch occupies residues 1 to 145 (MADSSSFPGT…DSWTPPCHPK (145 aa)). The dimerization and phosphorylation stretch occupies residues 24–161 (SPIQKISEEE…RLKTAVSNNF (138 aa)). The span at 58–67 (GNSFNGDNGS) shows a compositional bias: low complexity. The segment covering 121–138 (TSVSAESLNPTSAGSDSW) has biased composition (polar residues). Residue S122 is modified to Phosphoserine. Residues 162–291 (LFSH…FLEE), E240, R249, 294–413 (LLSS…PSPS), E361, and R370 contribute to the 3',5'-cyclic AMP site.

Belongs to the cAMP-dependent kinase regulatory chain family. As to quaternary structure, tetramer, composed of 2 regulatory (R) and 2 catalytic (C) subunits. In the presence of cAMP it dissociates into 2 active monomeric C subunits and an R dimer.

This is cAMP-dependent protein kinase regulatory subunit (pkaR) from Aspergillus fumigatus (strain ATCC MYA-4609 / CBS 101355 / FGSC A1100 / Af293) (Neosartorya fumigata).